A 279-amino-acid polypeptide reads, in one-letter code: Presqualene diphosphate synthase (279 aa).

This sequence belongs to the phytoene/squalene synthase family. HpnD subfamily.

It catalyses the reaction 2 (2E,6E)-farnesyl diphosphate = presqualene diphosphate + diphosphate. It functions in the pathway secondary metabolite biosynthesis; hopanoid biosynthesis. In terms of biological role, involved in the biosynthesis of the hopanoid precursor squalene (SQ) from farnesyl diphosphate (FPP). Catalyzes the first step, the formation of presqualene diphosphate (PSPP) from two molecules of FPP. In Rhodopseudomonas palustris (strain ATCC BAA-98 / CGA009), this protein is Presqualene diphosphate synthase.